An 88-amino-acid polypeptide reads, in one-letter code: ATP synthase subunit c 1 (88 aa).

2 helical membrane passes run 4–24 (FTWV…GTAI) and 53–73 (IGLA…MIIL).

It belongs to the ATPase C chain family. F-type ATPases have 2 components, F(1) - the catalytic core - and F(0) - the membrane proton channel. F(1) has five subunits: alpha(3), beta(3), gamma(1), delta(1), epsilon(1). F(0) has three main subunits: a(1), b(2) and c(10-14). The alpha and beta chains form an alternating ring which encloses part of the gamma chain. F(1) is attached to F(0) by a central stalk formed by the gamma and epsilon chains, while a peripheral stalk is formed by the delta and b chains.

It localises to the cell inner membrane. In terms of biological role, f(1)F(0) ATP synthase produces ATP from ADP in the presence of a proton or sodium gradient. F-type ATPases consist of two structural domains, F(1) containing the extramembraneous catalytic core and F(0) containing the membrane proton channel, linked together by a central stalk and a peripheral stalk. During catalysis, ATP synthesis in the catalytic domain of F(1) is coupled via a rotary mechanism of the central stalk subunits to proton translocation. Key component of the F(0) channel; it plays a direct role in translocation across the membrane. A homomeric c-ring of between 10-14 subunits forms the central stalk rotor element with the F(1) delta and epsilon subunits. This is ATP synthase subunit c 1 from Syntrophotalea carbinolica (strain DSM 2380 / NBRC 103641 / GraBd1) (Pelobacter carbinolicus).